The primary structure comprises 206 residues: Large ribosomal subunit protein uL4 (206 aa).

The segment at 55–80 (AFVSGGGAKPWRQKGTGRARSGSNRS) is disordered.

The protein belongs to the universal ribosomal protein uL4 family. In terms of assembly, part of the 50S ribosomal subunit.

One of the primary rRNA binding proteins, this protein initially binds near the 5'-end of the 23S rRNA. It is important during the early stages of 50S assembly. It makes multiple contacts with different domains of the 23S rRNA in the assembled 50S subunit and ribosome. In terms of biological role, forms part of the polypeptide exit tunnel. This chain is Large ribosomal subunit protein uL4, found in Nitratidesulfovibrio vulgaris (strain DSM 19637 / Miyazaki F) (Desulfovibrio vulgaris).